The chain runs to 401 residues: Argininosuccinate synthase (401 aa).

Ala-9–Ser-17 contributes to the ATP binding site. Position 86 (Tyr-86) interacts with L-citrulline. Gly-116 serves as a coordination point for ATP. The L-aspartate site is built by Thr-118, Asn-122, and Asp-123. Asn-122 contacts L-citrulline. L-citrulline-binding residues include Arg-126, Ser-174, Ser-183, Glu-259, and Tyr-271.

It belongs to the argininosuccinate synthase family. Type 1 subfamily. In terms of assembly, homotetramer.

It localises to the cytoplasm. It catalyses the reaction L-citrulline + L-aspartate + ATP = 2-(N(omega)-L-arginino)succinate + AMP + diphosphate + H(+). It participates in amino-acid biosynthesis; L-arginine biosynthesis; L-arginine from L-ornithine and carbamoyl phosphate: step 2/3. The polypeptide is Argininosuccinate synthase (Bacillus cereus (strain Q1)).